The chain runs to 528 residues: Exodeoxyribonuclease 7 large subunit (528 aa).

The disordered stretch occupies residues 486-528 (QGDRDAVIDGESSGVLPPSAAPAPTRPTPRPKPASSSDQGSLF). Pro residues predominate over residues 504 to 517 (SAAPAPTRPTPRPK).

The protein belongs to the XseA family. Heterooligomer composed of large and small subunits.

Its subcellular location is the cytoplasm. It catalyses the reaction Exonucleolytic cleavage in either 5'- to 3'- or 3'- to 5'-direction to yield nucleoside 5'-phosphates.. In terms of biological role, bidirectionally degrades single-stranded DNA into large acid-insoluble oligonucleotides, which are then degraded further into small acid-soluble oligonucleotides. This chain is Exodeoxyribonuclease 7 large subunit, found in Caulobacter sp. (strain K31).